The following is a 362-amino-acid chain: Probable dual-specificity RNA methyltransferase RlmN (362 aa).

The Proton acceptor role is filled by Glu91. Positions 97 to 329 (QHYGLSVCVT…KKNGVNCVVR (233 aa)) constitute a Radical SAM core domain. Cys104 and Cys340 form a disulfide bridge. [4Fe-4S] cluster is bound by residues Cys111, Cys115, and Cys118. S-adenosyl-L-methionine-binding positions include 163 to 164 (GE), Ser195, 218 to 220 (SLH), and Asn296. Cys340 functions as the S-methylcysteine intermediate in the catalytic mechanism.

Belongs to the radical SAM superfamily. RlmN family. It depends on [4Fe-4S] cluster as a cofactor.

It localises to the cytoplasm. The enzyme catalyses adenosine(2503) in 23S rRNA + 2 reduced [2Fe-2S]-[ferredoxin] + 2 S-adenosyl-L-methionine = 2-methyladenosine(2503) in 23S rRNA + 5'-deoxyadenosine + L-methionine + 2 oxidized [2Fe-2S]-[ferredoxin] + S-adenosyl-L-homocysteine. The catalysed reaction is adenosine(37) in tRNA + 2 reduced [2Fe-2S]-[ferredoxin] + 2 S-adenosyl-L-methionine = 2-methyladenosine(37) in tRNA + 5'-deoxyadenosine + L-methionine + 2 oxidized [2Fe-2S]-[ferredoxin] + S-adenosyl-L-homocysteine. Functionally, specifically methylates position 2 of adenine 2503 in 23S rRNA and position 2 of adenine 37 in tRNAs. The sequence is that of Probable dual-specificity RNA methyltransferase RlmN from Streptococcus gordonii (strain Challis / ATCC 35105 / BCRC 15272 / CH1 / DL1 / V288).